Consider the following 132-residue polypeptide: Homeobox protein HD-4 (132 aa).

A DNA-binding region (homeobox) is located at residues 29-88 (GLSGYRYKTHIQVYVLTKIFEITQYPSHDTRQNLAILLNMSPRTIQIWFQNSRSVSRGAA). Residues 82–101 (SVSRGAAKKKVSKDNGPQEA) are disordered.

It localises to the nucleus. The polypeptide is Homeobox protein HD-4 (HD-4) (Encephalitozoon cuniculi (strain GB-M1) (Microsporidian parasite)).